Here is a 131-residue protein sequence, read N- to C-terminus: UPF0292 protein PF1724 (131 aa).

In terms of domain architecture, Toprim spans lysine 20–alanine 103. Glutamate 26, aspartate 69, and aspartate 71 together coordinate Mg(2+).

It belongs to the UPF0292 family. Mg(2+) serves as cofactor.

This is UPF0292 protein PF1724 from Pyrococcus furiosus (strain ATCC 43587 / DSM 3638 / JCM 8422 / Vc1).